We begin with the raw amino-acid sequence, 99 residues long: DASH complex subunit DAD1 (99 aa).

Positions 69-99 (GMNHQTRENTRDENNKISSSDTEDENNNNKI) are disordered. The segment covering 73-83 (QTRENTRDENN) has biased composition (basic and acidic residues). Residues 89-99 (DTEDENNNNKI) show a composition bias toward acidic residues.

This sequence belongs to the DASH complex DAD1 family. In terms of assembly, component of the DASH complex consisting of ASK1, DAD1, DAD2, DAD3, DAD4, DAM1, DUO1, HSK3, SPC19 and SPC34, with a stoichiometry of one copy of each subunit per complex. Multiple DASH complexes oligomerize to form a ring that encircles spindle microtubules and organizes the rod-like NDC80 complexes of the outer kinetochore. DASH complex oligomerization strengthens microtubule attachments. On cytoplasmic microtubules, DASH complexes appear to form patches instead of rings.

Its subcellular location is the chromosome. The protein localises to the centromere. It localises to the kinetochore. It is found in the cytoplasm. The protein resides in the cytoskeleton. Its subcellular location is the spindle. The protein localises to the nucleus. In terms of biological role, component of the DASH complex that connects microtubules with kinetochores and couples microtubule depolymerisation to chromosome movement; it is involved in retrieving kinetochores to the spindle poles before their re-orientation on the spindle in early mitosis and allows microtubule depolymerization to pull chromosomes apart and resist detachment during anaphase. Kinetochores, consisting of a centromere-associated inner segment and a microtubule-contacting outer segment, play a crucial role in chromosome segregation by mediating the physical connection between centromeric DNA and microtubules. Kinetochores also serve as an input point for the spindle assembly checkpoint, which delays anaphase until all chromosomes have bioriented on the mitotic spindle. The chain is DASH complex subunit DAD1 from Candida albicans (strain SC5314 / ATCC MYA-2876) (Yeast).